The primary structure comprises 599 residues: Elongation factor 4 (599 aa).

The region spanning 2–184 is the tr-type G domain; sequence KNIRNFSIIA…RLVRDIPPPE (183 aa). Residues 14–19 and 131–134 each bind GTP; these read DHGKST and NKID.

Belongs to the TRAFAC class translation factor GTPase superfamily. Classic translation factor GTPase family. LepA subfamily.

Its subcellular location is the cell inner membrane. It catalyses the reaction GTP + H2O = GDP + phosphate + H(+). Its function is as follows. Required for accurate and efficient protein synthesis under certain stress conditions. May act as a fidelity factor of the translation reaction, by catalyzing a one-codon backward translocation of tRNAs on improperly translocated ribosomes. Back-translocation proceeds from a post-translocation (POST) complex to a pre-translocation (PRE) complex, thus giving elongation factor G a second chance to translocate the tRNAs correctly. Binds to ribosomes in a GTP-dependent manner. The polypeptide is Elongation factor 4 (Shigella sonnei (strain Ss046)).